An 892-amino-acid chain; its full sequence is von Willebrand factor A domain-containing protein 7 (892 aa).

Positions 1–27 are cleaved as a signal peptide; the sequence is MLPVEVPLSQLGPPVLLLQLLLPPTSA. Asn-54 carries an N-linked (GlcNAc...) asparagine glycan. The disordered stretch occupies residues 231–272; it reads YFGTNPPKPPGKCSHGGRFDQSSSQPPRGGINKDSTSPSFSP. A VWFA domain is found at 313–495; it reads ASSLSFVLDT…HIRDVAAVVG (183 aa).

It is found in the secreted. This chain is von Willebrand factor A domain-containing protein 7 (Vwa7), found in Rattus norvegicus (Rat).